A 313-amino-acid polypeptide reads, in one-letter code: MNIFTLLFIYFLSDTVAAYCYYGTEYKNATGCFQFFRTPLNFTNAVRFCRVNMKSTLVRPTSSIRNQQIRGAALKLGIEEYWIGASNVDNDWEWLDGSMLTYSNFDVGGGYPKKTESQIGAVSMSSLAGLWYTKLDAMFLPFVCEFPPSTVYDNGILYRSPKTQSLIFPSAGTKAALLMVDAVDQSRLYSKNEIGPLKTEAETGEKVYLKPINISTNGFPEFSGPPIVILNPYKRKIKVKPVMVSQTETEMSRSRKEKEETEDSINVKSLKEGGTARGNGSSVAEELNSNSKEKREREENETIRSKTIQISRG.

Positions 1 to 17 are cleaved as a signal peptide; it reads MNIFTLLFIYFLSDTVA. Residues asparagine 28 and asparagine 41 are each glycosylated (N-linked (GlcNAc...) asparagine). The C-type lectin domain occupies 28–145; that stretch reads NATGCFQFFR…DAMFLPFVCE (118 aa). Cysteine 49 and cysteine 144 are disulfide-bonded. Asparagine 213 is a glycosylation site (N-linked (GlcNAc...) asparagine). The tract at residues 244–313 is disordered; that stretch reads VSQTETEMSR…RSKTIQISRG (70 aa). Over residues 250–259 the composition is skewed to basic and acidic residues; it reads EMSRSRKEKE. Residues asparagine 279 and asparagine 300 are each glycosylated (N-linked (GlcNAc...) asparagine). Residues 291 to 304 are compositionally biased toward basic and acidic residues; sequence SKEKREREENETIR.

It localises to the secreted. This chain is C-type lectin domain-containing protein 162 (clec-162), found in Caenorhabditis elegans.